The following is a 272-amino-acid chain: Phosphate import ATP-binding protein PstB (272 aa).

The 248-residue stretch at 20 to 267 folds into the ABC transporter domain; sequence VKKEVVYETN…PADQRTADYI (248 aa). 58–65 contacts ATP; the sequence is GPSGCGKS.

It belongs to the ABC transporter superfamily. Phosphate importer (TC 3.A.1.7) family. As to quaternary structure, the complex is composed of two ATP-binding proteins (PstB), two transmembrane proteins (PstC and PstA) and a solute-binding protein (PstS).

The protein localises to the cell membrane. It carries out the reaction phosphate(out) + ATP + H2O = ADP + 2 phosphate(in) + H(+). In terms of biological role, part of the ABC transporter complex PstSACB involved in phosphate import. Responsible for energy coupling to the transport system. The sequence is that of Phosphate import ATP-binding protein PstB from Geobacillus kaustophilus (strain HTA426).